A 432-amino-acid chain; its full sequence is Enolase (432 aa).

Gln167 provides a ligand contact to (2R)-2-phosphoglycerate. Catalysis depends on Glu209, which acts as the Proton donor. Mg(2+)-binding residues include Asp246, Glu287, and Asp314. (2R)-2-phosphoglycerate contacts are provided by Lys339, Arg368, Ser369, and Lys390. Lys339 functions as the Proton acceptor in the catalytic mechanism.

It belongs to the enolase family. It depends on Mg(2+) as a cofactor.

The protein resides in the cytoplasm. It localises to the secreted. The protein localises to the cell surface. The enzyme catalyses (2R)-2-phosphoglycerate = phosphoenolpyruvate + H2O. The protein operates within carbohydrate degradation; glycolysis; pyruvate from D-glyceraldehyde 3-phosphate: step 4/5. Functionally, catalyzes the reversible conversion of 2-phosphoglycerate (2-PG) into phosphoenolpyruvate (PEP). It is essential for the degradation of carbohydrates via glycolysis. This chain is Enolase, found in Prochlorococcus marinus (strain SARG / CCMP1375 / SS120).